The following is a 128-amino-acid chain: Small ribosomal subunit protein uS9c (128 aa).

This sequence belongs to the universal ribosomal protein uS9 family.

Its subcellular location is the plastid. In Euglena longa (Euglenophycean alga), this protein is Small ribosomal subunit protein uS9c (rps9).